Here is a 579-residue protein sequence, read N- to C-terminus: Deleted in azoospermia protein 4 (579 aa).

The segment covering 1-10 (MSAANPETPN) has biased composition (polar residues). A disordered region spans residues 1 to 27 (MSAANPETPNSTISREASTQSSSAAAS). Residues 11-27 (STISREASTQSSSAAAS) show a composition bias toward low complexity. The region spanning 40–115 (NTVFVGGIDA…KKLKLGPAIR (76 aa)) is the RRM 1 domain. The span at 163-175 (QHVQSAANPETPN) shows a compositional bias: polar residues. Positions 163-192 (QHVQSAANPETPNSTISREASTQSSSAAAS) are disordered. The segment covering 176–192 (STISREASTQSSSAAAS) has biased composition (low complexity). The RRM 2 domain occupies 205 to 280 (NTVFVGGIDA…KKLKLGPAIR (76 aa)). 9 DAZ domains span residues 332-355 (AYSA…YNYQ), 356-379 (EYPT…YNYQ), 380-403 (PFPA…YNYQ), 404-427 (AFPA…YNYQ), 428-451 (PFPA…YNYQ), 452-475 (AFPA…YNYQ), 476-499 (AFPA…YNYQ), 500-523 (AFPA…YNYQ), and 524-547 (AFPA…YNYQ).

The protein belongs to the RRM DAZ family. As to quaternary structure, forms a heterodimer with BOLL and DAZL. Interacts with PUM2, DAZAP1, DAZAP2, DZIP1 and DZIP3. Testis-specific. Expression restricted to premeiotic germ cells, particularly in spermatogonia (at protein level).

It localises to the cytoplasm. The protein localises to the nucleus. Its function is as follows. RNA-binding protein that plays an essential role in spermatogenesis. May act by binding to the 3'-UTR of mRNAs and regulating their translation. The protein is Deleted in azoospermia protein 4 (DAZ4) of Homo sapiens (Human).